Reading from the N-terminus, the 566-residue chain is Pentatricopeptide repeat-containing protein At4g11690 (566 aa).

PPR repeat units follow at residues 93–127 (KFRL…GFVP), 128–158 (GSNC…NKSK), 162–196 (DVYS…GFSP), 197–231 (NVVI…GLVA), 232–266 (NERT…GVFP), 267–301 (NLYT…GVSC), 302–336 (NIVT…GINP), 337–371 (NLIT…GLSP), 372–406 (SLVT…GIKP), 407–441 (SKVT…GLVP), 442–476 (DVHT…NCEP), 477–511 (NEVI…ELAP), and 512–546 (NVAS…GIDP).

The protein belongs to the PPR family. P subfamily.

The chain is Pentatricopeptide repeat-containing protein At4g11690 from Arabidopsis thaliana (Mouse-ear cress).